The chain runs to 154 residues: MAENSGRAGKSSGSGAGKGAVSAEQVIAGFNRLRQEQRGLASKAAELEMELNEHSLVIDTLKEVDETRKCYRMVGGVLVERTVKEVLPALENNKEQIQKIIETLTQQLQAKGKELNEFREKHNIRLMGEDEKPAAKENSEGAGAKASSAGVLVS.

The segment covering 124 to 139 (IRLMGEDEKPAAKENS) has biased composition (basic and acidic residues). A disordered region spans residues 124–154 (IRLMGEDEKPAAKENSEGAGAKASSAGVLVS). The segment covering 140–154 (EGAGAKASSAGVLVS) has biased composition (low complexity).

This sequence belongs to the prefoldin subunit beta family. In terms of assembly, heterohexamer of two PFD-alpha type and four PFD-beta type subunits. Component of the PAQosome complex which is responsible for the biogenesis of several protein complexes and which consists of R2TP complex members RUVBL1, RUVBL2, RPAP3 and PIH1D1, URI complex members PFDN2, PFDN6, PDRG1, UXT and URI1 as well as ASDURF, POLR2E and DNAAF10/WDR92. Interacts with URI1; the interaction is phosphorylation-dependent and occurs in a growth-dependent manner.

Its subcellular location is the nucleus. The protein localises to the cytoplasm. It is found in the mitochondrion. Functionally, binds specifically to cytosolic chaperonin (c-CPN) and transfers target proteins to it. Binds to nascent polypeptide chain and promotes folding in an environment in which there are many competing pathways for nonnative proteins. This is Prefoldin subunit 2 (PFDN2) from Homo sapiens (Human).